Reading from the N-terminus, the 385-residue chain is Gibberellin 20 oxidase 5 (385 aa).

Residues 224-324 form the Fe2OG dioxygenase domain; that stretch reads DGSGIFRCNY…RRSLVFFSCP (101 aa). Fe cation-binding residues include His-249, Asp-251, and His-305. The active site involves Arg-315.

This sequence belongs to the iron/ascorbate-dependent oxidoreductase family. GA20OX subfamily. Fe(2+) serves as cofactor. It depends on L-ascorbate as a cofactor. As to expression, expressed in 3-day-old seedlings and siliques. Detected in dry seeds, roots, old leaves and inflorescences.

The catalysed reaction is gibberellin A12 + 2 2-oxoglutarate + 3 O2 + H(+) = gibberellin A9 + 2 succinate + 3 CO2 + 2 H2O. It carries out the reaction gibberellin A53 + 2 2-oxoglutarate + 3 O2 + H(+) = gibberellin A20 + 2 succinate + 3 CO2 + 2 H2O. The protein operates within plant hormone biosynthesis; gibberellin biosynthesis. Key oxidase enzyme in the biosynthesis of gibberellin that catalyzes the conversion of GA12 and GA53 to GA9 and GA20 respectively, via a three-step oxidation at C-20 of the GA skeleton. The polypeptide is Gibberellin 20 oxidase 5 (GA20OX5) (Arabidopsis thaliana (Mouse-ear cress)).